Consider the following 267-residue polypeptide: Orotidine 5'-phosphate decarboxylase (267 aa).

Residues Asp-37, 59-61 (KTH), 91-100 (DRKFADIGNT), Tyr-217, and Arg-235 each bind substrate. The active-site Proton donor is the Lys-93.

Belongs to the OMP decarboxylase family.

The enzyme catalyses orotidine 5'-phosphate + H(+) = UMP + CO2. It functions in the pathway pyrimidine metabolism; UMP biosynthesis via de novo pathway; UMP from orotate: step 2/2. The chain is Orotidine 5'-phosphate decarboxylase (URA3) from Kluyveromyces marxianus (Yeast).